Reading from the N-terminus, the 224-residue chain is uncharacterized protein (224 aa).

Positions 177, 197, and 206 each coordinate S-adenosyl-L-methionine.

It belongs to the class IV-like SAM-binding methyltransferase superfamily. RNA methyltransferase TrmH family.

This is an uncharacterized protein from Archaeoglobus fulgidus (strain ATCC 49558 / DSM 4304 / JCM 9628 / NBRC 100126 / VC-16).